Reading from the N-terminus, the 270-residue chain is Bark lectin (270 aa).

A signal peptide spans 1–15 (ISITFFLLLLNKVNS). N-linked (GlcNAc...) asparagine glycosylation is found at asparagine 60, asparagine 76, and asparagine 127. The Mn(2+) site is built by glutamate 141 and aspartate 143. Ca(2+) contacts are provided by aspartate 143, histidine 145, asparagine 147, and aspartate 150. Residues aspartate 150 and histidine 155 each coordinate Mn(2+). An N-linked (GlcNAc...) asparagine glycan is attached at asparagine 201.

Belongs to the leguminous lectin family.

GalNAc-specific lectin. The sequence is that of Bark lectin from Styphnolobium japonicum (Japanese pagoda tree).